We begin with the raw amino-acid sequence, 525 residues long: Packaging protein UL32 homolog (525 aa).

Over residues 1–12 the composition is skewed to polar residues; sequence MAHKVTSANEPN. Positions 1–20 are disordered; sequence MAHKVTSANEPNPLTGKRLS. Zn(2+)-binding residues include Cys95, Cys98, His173, Cys179, Cys255, Cys256, Cys357, Cys360, His427, Cys434, Cys473, and His510. Zinc finger regions lie at residues 95-179, 255-510, and 357-434; these read CRVC…ICRC, CCHL…LRIH, and CPLC…DPLC.

It belongs to the herpesviridae UL32 protein family.

Its subcellular location is the host cytoplasm. The protein resides in the host nucleus. Functionally, plays a role in efficient localization of neo-synthesized capsids to nuclear replication compartments, thereby controlling cleavage and packaging of virus genomic DNA. The chain is Packaging protein UL32 homolog from Epstein-Barr virus (strain B95-8) (HHV-4).